Reading from the N-terminus, the 420-residue chain is Bicoumarin synthase ktnC (420 aa).

A heme-binding site is contributed by C362.

The protein belongs to the cytochrome P450 family. Requires heme as cofactor.

It catalyses the reaction 2 7-demethylsiderin + NADPH + O2 = orlandin + NADP(+) + 2 H2O. It participates in secondary metabolite biosynthesis. In terms of biological role, non-reducing polyketide synthase; part of the gene cluster that mediates the biosynthesis of the bicoumarin kotanin. The non-reducing polyketide synthase ktnS first catalyzes the formation of the pentaketidic 4,7-dihydroxy-5-methylcoumarin from acetyl coenzyme A and 4 malonyl coenzyme A molecules. Further O-methylation by ktnB leads to the formation of 7-demethylsiderin. Then, an oxidative phenol coupling catalyzed by the cytochrome P450 monooxygenase ktnC forms the 8,8'-dimer P-orlandin via dimerization the monomeric precursor, 7-demethylsiderin. P-orlandin is subsequently O-methylated in a stepwise fashion to demethylkotanin and kotanin. This Aspergillus niger (strain ATCC MYA-4892 / CBS 513.88 / FGSC A1513) protein is Bicoumarin synthase ktnC.